We begin with the raw amino-acid sequence, 357 residues long: Peptide chain release factor 1 (357 aa).

Q236 is subject to N5-methylglutamine. Basic and acidic residues predominate over residues 284-293 (RRKKDQERAN). The interval 284–313 (RRKKDQERANNRRKQIGSGDRSERIRTYNF) is disordered.

Belongs to the prokaryotic/mitochondrial release factor family. Methylated by PrmC. Methylation increases the termination efficiency of RF1.

The protein localises to the cytoplasm. In terms of biological role, peptide chain release factor 1 directs the termination of translation in response to the peptide chain termination codons UAG and UAA. The sequence is that of Peptide chain release factor 1 from Rickettsia bellii (strain RML369-C).